The sequence spans 130 residues: Small ribosomal subunit protein uS9 (130 aa).

A disordered region spans residues 102–130 (GLLTRDSRMKERKKPGLKGARRAPQFSKR). A compositionally biased stretch (basic residues) spans 111 to 130 (KERKKPGLKGARRAPQFSKR).

Belongs to the universal ribosomal protein uS9 family.

This Listeria monocytogenes serovar 1/2a (strain ATCC BAA-679 / EGD-e) protein is Small ribosomal subunit protein uS9.